The chain runs to 90 residues: Sec-independent protein translocase protein TatA (90 aa).

A helical membrane pass occupies residues 1–21; sequence MGLPGGWELVLIVGVLVLLFG. Residues 42–60 show a composition bias toward basic and acidic residues; sequence EARGMKEDEEAAKREKQAK. The tract at residues 42-90 is disordered; that stretch reads EARGMKEDEEAAKREKQAKSEPQQLTAGESSAPTVASPVEETQRNDSKK. The segment covering 61-75 has biased composition (polar residues); sequence SEPQQLTAGESSAPT.

It belongs to the TatA/E family. In terms of assembly, the Tat system comprises two distinct complexes: a TatABC complex, containing multiple copies of TatA, TatB and TatC subunits, and a separate TatA complex, containing only TatA subunits. Substrates initially bind to the TatABC complex, which probably triggers association of the separate TatA complex to form the active translocon.

It localises to the cell membrane. Part of the twin-arginine translocation (Tat) system that transports large folded proteins containing a characteristic twin-arginine motif in their signal peptide across membranes. TatA could form the protein-conducting channel of the Tat system. The protein is Sec-independent protein translocase protein TatA of Saccharopolyspora erythraea (strain ATCC 11635 / DSM 40517 / JCM 4748 / NBRC 13426 / NCIMB 8594 / NRRL 2338).